The sequence spans 327 residues: Tetraacyldisaccharide 4'-kinase (327 aa).

An ATP-binding site is contributed by 58 to 65; that stretch reads TVGGTGKT.

This sequence belongs to the LpxK family.

It carries out the reaction a lipid A disaccharide + ATP = a lipid IVA + ADP + H(+). Its pathway is glycolipid biosynthesis; lipid IV(A) biosynthesis; lipid IV(A) from (3R)-3-hydroxytetradecanoyl-[acyl-carrier-protein] and UDP-N-acetyl-alpha-D-glucosamine: step 6/6. Its function is as follows. Transfers the gamma-phosphate of ATP to the 4'-position of a tetraacyldisaccharide 1-phosphate intermediate (termed DS-1-P) to form tetraacyldisaccharide 1,4'-bis-phosphate (lipid IVA). This Alcanivorax borkumensis (strain ATCC 700651 / DSM 11573 / NCIMB 13689 / SK2) protein is Tetraacyldisaccharide 4'-kinase.